Here is a 525-residue protein sequence, read N- to C-terminus: Packaging protein UL32 homolog (525 aa).

Residues 1 to 12 (MAHKVTSANEPN) show a composition bias toward polar residues. The tract at residues 1 to 20 (MAHKVTSANEPNPLTGKRLS) is disordered. Zn(2+)-binding residues include cysteine 95, cysteine 98, histidine 173, cysteine 179, cysteine 255, cysteine 256, cysteine 357, cysteine 360, histidine 427, cysteine 434, cysteine 473, and histidine 510. Zinc finger regions lie at residues 95–179 (CRVC…ICRC), 255–510 (CCHL…LRIH), and 357–434 (CPLC…DPLC).

The protein belongs to the herpesviridae UL32 protein family.

The protein resides in the host cytoplasm. Its subcellular location is the host nucleus. Its function is as follows. Plays a role in efficient localization of neo-synthesized capsids to nuclear replication compartments, thereby controlling cleavage and packaging of virus genomic DNA. The polypeptide is Packaging protein UL32 homolog (Epstein-Barr virus (strain B95-8) (HHV-4)).